The chain runs to 500 residues: Trehalose-6-phosphate synthase (500 aa).

Residue arginine 28 coordinates D-glucose 6-phosphate. Residue 48-49 (GG) coordinates UDP-alpha-D-glucose. D-glucose 6-phosphate-binding residues include tyrosine 104 and aspartate 158. 2 residues coordinate UDP-alpha-D-glucose: arginine 300 and lysine 305. Residue arginine 338 participates in D-glucose 6-phosphate binding. 403–407 (LVAKE) provides a ligand contact to UDP-alpha-D-glucose.

It belongs to the glycosyltransferase 20 family. As to quaternary structure, homotetramer.

The catalysed reaction is ADP-alpha-D-glucose + D-glucose 6-phosphate = alpha,alpha-trehalose 6-phosphate + ADP + H(+). It carries out the reaction CDP-alpha-D-glucose + D-glucose 6-phosphate = alpha,alpha-trehalose 6-phosphate + CDP + H(+). It catalyses the reaction GDP-alpha-D-glucose + D-glucose 6-phosphate = alpha,alpha-trehalose 6-phosphate + GDP + H(+). The enzyme catalyses TDP-alpha-D-glucose + D-glucose 6-phosphate = 5-methyl-UDP + alpha,alpha-trehalose 6-phosphate + H(+). The catalysed reaction is D-glucose 6-phosphate + UDP-alpha-D-glucose = alpha,alpha-trehalose 6-phosphate + UDP + H(+). Its pathway is glycan biosynthesis; trehalose biosynthesis. In terms of biological role, probably involved in the osmoprotection via the biosynthesis of trehalose and in the production of glycogen and alpha-glucan via the TreS-Pep2 branch involved in the biosynthesis of maltose-1-phosphate (M1P). Catalyzes the transfer of glucose from UDP-glucose (UDP-Glc) to D-glucose 6-phosphate (Glc-6-P) to form trehalose-6-phosphate. Probably also able to use ADP-Glc, CDP-Glc, GDP-Glc and TDP-Glc as glucosyl donors. This is Trehalose-6-phosphate synthase from Mycobacterium marinum (strain ATCC BAA-535 / M).